The primary structure comprises 224 residues: Protein PLANT CADMIUM RESISTANCE 6 (224 aa).

Residues 131–151 (GMLYGLICCLFAIPCVYTCTF) traverse the membrane as a helical segment.

This sequence belongs to the cornifelin family.

The protein resides in the membrane. Its function is as follows. May be involved in heavy metals transport. This Arabidopsis thaliana (Mouse-ear cress) protein is Protein PLANT CADMIUM RESISTANCE 6 (PCR6).